Consider the following 329-residue polypeptide: Glycerol-3-phosphate dehydrogenase [NAD(P)+] (329 aa).

The NADPH site is built by Ser13, Trp14, His34, and Lys105. Residues Lys105, Gly134, and Ser136 each contribute to the sn-glycerol 3-phosphate site. Position 138 (Ala138) interacts with NADPH. Lys189, Asp242, Ser252, Arg253, and Asn254 together coordinate sn-glycerol 3-phosphate. Lys189 acts as the Proton acceptor in catalysis. Arg253 serves as a coordination point for NADPH. NADPH-binding residues include Val277 and Glu279.

The protein belongs to the NAD-dependent glycerol-3-phosphate dehydrogenase family.

It is found in the cytoplasm. It carries out the reaction sn-glycerol 3-phosphate + NAD(+) = dihydroxyacetone phosphate + NADH + H(+). The catalysed reaction is sn-glycerol 3-phosphate + NADP(+) = dihydroxyacetone phosphate + NADPH + H(+). The protein operates within membrane lipid metabolism; glycerophospholipid metabolism. Functionally, catalyzes the reduction of the glycolytic intermediate dihydroxyacetone phosphate (DHAP) to sn-glycerol 3-phosphate (G3P), the key precursor for phospholipid synthesis. This chain is Glycerol-3-phosphate dehydrogenase [NAD(P)+], found in Legionella pneumophila (strain Paris).